Consider the following 198-residue polypeptide: Nucleoside triphosphate pyrophosphatase (198 aa).

The active-site Proton acceptor is Asp-70.

The protein belongs to the Maf family. A divalent metal cation is required as a cofactor.

The protein localises to the cytoplasm. The catalysed reaction is a ribonucleoside 5'-triphosphate + H2O = a ribonucleoside 5'-phosphate + diphosphate + H(+). The enzyme catalyses a 2'-deoxyribonucleoside 5'-triphosphate + H2O = a 2'-deoxyribonucleoside 5'-phosphate + diphosphate + H(+). In terms of biological role, nucleoside triphosphate pyrophosphatase. May have a dual role in cell division arrest and in preventing the incorporation of modified nucleotides into cellular nucleic acids. This is Nucleoside triphosphate pyrophosphatase from Thermosynechococcus vestitus (strain NIES-2133 / IAM M-273 / BP-1).